The following is a 214-amino-acid chain: Nucleoplasmin-2 (214 aa).

The tract at residues Glu119–Lys214 is disordered. Positions Thr127–Leu155 are enriched in acidic residues. The tract at residues Glu129–Asp152 is acidic tract A2. The short motif at Lys165 to Lys180 is the Bipartite nuclear localization signal element. The span at Leu181–Pro197 shows a compositional bias: basic and acidic residues. Residues Val198–Lys214 are compositionally biased toward basic residues.

This sequence belongs to the nucleoplasmin family. As to quaternary structure, homopentamer, when bound to H2A-H2B dimers only. Homodecamer of two stacked pentamers, when bound to H2A-H2B dimers and H3-H4 tetramers simultaneously.

It localises to the nucleus. Its function is as follows. Core histones chaperone involved in chromatin reprogramming, specially during fertilization and early embryonic development. Probably involved in sperm DNA decondensation during fertilization. The protein is Nucleoplasmin-2 (NPM2) of Homo sapiens (Human).